Reading from the N-terminus, the 261-residue chain is Imidazole glycerol phosphate synthase subunit HisF (261 aa).

Catalysis depends on residues Asp-16 and Asp-135.

The protein belongs to the HisA/HisF family. As to quaternary structure, heterodimer of HisH and HisF.

The protein resides in the cytoplasm. It catalyses the reaction 5-[(5-phospho-1-deoxy-D-ribulos-1-ylimino)methylamino]-1-(5-phospho-beta-D-ribosyl)imidazole-4-carboxamide + L-glutamine = D-erythro-1-(imidazol-4-yl)glycerol 3-phosphate + 5-amino-1-(5-phospho-beta-D-ribosyl)imidazole-4-carboxamide + L-glutamate + H(+). Its pathway is amino-acid biosynthesis; L-histidine biosynthesis; L-histidine from 5-phospho-alpha-D-ribose 1-diphosphate: step 5/9. IGPS catalyzes the conversion of PRFAR and glutamine to IGP, AICAR and glutamate. The HisF subunit catalyzes the cyclization activity that produces IGP and AICAR from PRFAR using the ammonia provided by the HisH subunit. The protein is Imidazole glycerol phosphate synthase subunit HisF of Mycolicibacterium gilvum (strain PYR-GCK) (Mycobacterium gilvum (strain PYR-GCK)).